A 295-amino-acid chain; its full sequence is Microcin B17-processing protein McbB (295 aa).

Its subcellular location is the cytoplasm. Necessary to process the inactive microcin B17 (McbA) precursor into the active peptide. The protein is Microcin B17-processing protein McbB (mcbB) of Escherichia coli.